We begin with the raw amino-acid sequence, 117 residues long: UPF0102 protein FTW_1281 (117 aa).

Belongs to the UPF0102 family.

In Francisella tularensis subsp. tularensis (strain WY96-3418), this protein is UPF0102 protein FTW_1281.